A 260-amino-acid polypeptide reads, in one-letter code: Triosephosphate isomerase (260 aa).

11-13 (NWK) contacts substrate. H103 serves as the catalytic Electrophile. The active-site Proton acceptor is the E175. Substrate contacts are provided by residues G181, S220, and 241 to 242 (GG).

Belongs to the triosephosphate isomerase family. In terms of assembly, homodimer.

It is found in the cytoplasm. It carries out the reaction D-glyceraldehyde 3-phosphate = dihydroxyacetone phosphate. It functions in the pathway carbohydrate biosynthesis; gluconeogenesis. It participates in carbohydrate degradation; glycolysis; D-glyceraldehyde 3-phosphate from glycerone phosphate: step 1/1. In terms of biological role, involved in the gluconeogenesis. Catalyzes stereospecifically the conversion of dihydroxyacetone phosphate (DHAP) to D-glyceraldehyde-3-phosphate (G3P). This chain is Triosephosphate isomerase, found in Shewanella sp. (strain W3-18-1).